The following is a 306-amino-acid chain: MIPLLAIVGPTAVGKTALSLHLARLFDGEIVSADSRQVYRWMDIGTAKPTPAERATVPHHLIDVVDPDEDFSLALYQDMATAAIADIAARGKLPLLVGGTGQYLAAVLQGWQLPRVAPRPDIRAALERQASEQGGEALYARLKEVDPIAAARILPGNVRRIIRALEVYEATGIPISEQRSVQPPPYRITTIWLTLPAPVLYARIDARVEAMMAAGLLDEVRGLLERGYHWNLPSMSGLGYREFRPYFEGRATLEEAVTRLKYDTHTFARRQPAWFRRLPNIVTLPADAPDLLQRAEAIVRQTFDSS.

9 to 16 (GPTAVGKT) lines the ATP pocket. 11–16 (TAVGKT) contacts substrate. The interval 34-37 (DSRQ) is interaction with substrate tRNA.

Belongs to the IPP transferase family. As to quaternary structure, monomer. It depends on Mg(2+) as a cofactor.

It catalyses the reaction adenosine(37) in tRNA + dimethylallyl diphosphate = N(6)-dimethylallyladenosine(37) in tRNA + diphosphate. Functionally, catalyzes the transfer of a dimethylallyl group onto the adenine at position 37 in tRNAs that read codons beginning with uridine, leading to the formation of N6-(dimethylallyl)adenosine (i(6)A). The sequence is that of tRNA dimethylallyltransferase from Roseiflexus castenholzii (strain DSM 13941 / HLO8).